We begin with the raw amino-acid sequence, 252 residues long: 3-dehydroquinate dehydratase (252 aa).

Residues serine 21, 46–48 (EWR), and arginine 82 contribute to the 3-dehydroquinate site. Histidine 143 functions as the Proton donor/acceptor in the catalytic mechanism. The Schiff-base intermediate with substrate role is filled by lysine 170. The 3-dehydroquinate site is built by arginine 213, serine 232, and glutamine 236.

It belongs to the type-I 3-dehydroquinase family. As to quaternary structure, homodimer.

It catalyses the reaction 3-dehydroquinate = 3-dehydroshikimate + H2O. It participates in metabolic intermediate biosynthesis; chorismate biosynthesis; chorismate from D-erythrose 4-phosphate and phosphoenolpyruvate: step 3/7. Involved in the third step of the chorismate pathway, which leads to the biosynthesis of aromatic amino acids. Catalyzes the cis-dehydration of 3-dehydroquinate (DHQ) and introduces the first double bond of the aromatic ring to yield 3-dehydroshikimate. The chain is 3-dehydroquinate dehydratase from Salmonella agona (strain SL483).